The sequence spans 178 residues: MVDENTQDNAPEQEEEAAIVQAGPVSSWLTENGFDHDLLEPDHLGVELIKVSPDFLVPLCTALYAYGFNYLQCQGAYDLGPGKELVSFYHLIKVSDNCEQAEEVRIKVFLPRDNPHIPSVYWIWKAADWQERESYDMYGIIYDGHPDLKRILMPEDWVGWPLRKDYVSPDFYELQDAY.

Belongs to the complex I 30 kDa subunit family. In terms of assembly, NDH-1 can be composed of about 15 different subunits; different subcomplexes with different compositions have been identified which probably have different functions.

Its subcellular location is the cellular thylakoid membrane. It catalyses the reaction a plastoquinone + NADH + (n+1) H(+)(in) = a plastoquinol + NAD(+) + n H(+)(out). The enzyme catalyses a plastoquinone + NADPH + (n+1) H(+)(in) = a plastoquinol + NADP(+) + n H(+)(out). Its function is as follows. NDH-1 shuttles electrons from an unknown electron donor, via FMN and iron-sulfur (Fe-S) centers, to quinones in the respiratory and/or the photosynthetic chain. The immediate electron acceptor for the enzyme in this species is believed to be plastoquinone. Couples the redox reaction to proton translocation, and thus conserves the redox energy in a proton gradient. Cyanobacterial NDH-1 also plays a role in inorganic carbon-concentration. This chain is NAD(P)H-quinone oxidoreductase subunit J, found in Crocosphaera subtropica (strain ATCC 51142 / BH68) (Cyanothece sp. (strain ATCC 51142)).